The following is a 339-amino-acid chain: MKNTADITVLGAGSYGTALAISLASNGHRTMLWGHEPEHIENLKNDKSNEAFLPGIPLPDLLIPEADLATALAASNNVLVVVPSHVFGLVLTQAKPLLRKDSRIVWATKGLEPETGRLIQDVAREAIGDEFPLAVLSGPTFAKELAAGMPTAISIAGTDPQFTKDLVELLHSPKRLRVYANDDFIGLQLGGAVKNVIAIGAGLSDGIGFGANARTALITRGLVELTRLGEAMGAQASTFMGMAGLGDLVLTCTDNQSRNRRFGLALGKGSDVETAQDEIGQVVEGYRNTKEVYTLAKRLGVEMPITEQVYQVLYKGKSPVDAAKELLSREKKSETSSAE.

NADPH-binding residues include Ser14, Tyr15, His35, and Lys109. Residues Lys109, Gly138, and Thr140 each contribute to the sn-glycerol 3-phosphate site. Ala142 is a binding site for NADPH. Sn-glycerol 3-phosphate is bound by residues Lys194, Asp247, Ser257, Arg258, and Asn259. The Proton acceptor role is filled by Lys194. NADPH is bound at residue Arg258. Residues Val282 and Glu284 each contribute to the NADPH site.

Belongs to the NAD-dependent glycerol-3-phosphate dehydrogenase family.

Its subcellular location is the cytoplasm. The catalysed reaction is sn-glycerol 3-phosphate + NAD(+) = dihydroxyacetone phosphate + NADH + H(+). The enzyme catalyses sn-glycerol 3-phosphate + NADP(+) = dihydroxyacetone phosphate + NADPH + H(+). Its pathway is membrane lipid metabolism; glycerophospholipid metabolism. Its function is as follows. Catalyzes the reduction of the glycolytic intermediate dihydroxyacetone phosphate (DHAP) to sn-glycerol 3-phosphate (G3P), the key precursor for phospholipid synthesis. This Shewanella pealeana (strain ATCC 700345 / ANG-SQ1) protein is Glycerol-3-phosphate dehydrogenase [NAD(P)+].